Reading from the N-terminus, the 341-residue chain is S-adenosylmethionine:tRNA ribosyltransferase-isomerase (341 aa).

Belongs to the QueA family. As to quaternary structure, monomer.

The protein resides in the cytoplasm. The catalysed reaction is 7-aminomethyl-7-carbaguanosine(34) in tRNA + S-adenosyl-L-methionine = epoxyqueuosine(34) in tRNA + adenine + L-methionine + 2 H(+). It participates in tRNA modification; tRNA-queuosine biosynthesis. Its function is as follows. Transfers and isomerizes the ribose moiety from AdoMet to the 7-aminomethyl group of 7-deazaguanine (preQ1-tRNA) to give epoxyqueuosine (oQ-tRNA). The protein is S-adenosylmethionine:tRNA ribosyltransferase-isomerase of Citrifermentans bemidjiense (strain ATCC BAA-1014 / DSM 16622 / JCM 12645 / Bem) (Geobacter bemidjiensis).